Reading from the N-terminus, the 172-residue chain is 3-hydroxydecanoyl-[acyl-carrier-protein] dehydratase (172 aa).

The active site involves H70.

It belongs to the thioester dehydratase family. FabA subfamily. In terms of assembly, homodimer.

The protein localises to the cytoplasm. The catalysed reaction is a (3R)-hydroxyacyl-[ACP] = a (2E)-enoyl-[ACP] + H2O. The enzyme catalyses (3R)-hydroxydecanoyl-[ACP] = (2E)-decenoyl-[ACP] + H2O. It carries out the reaction (2E)-decenoyl-[ACP] = (3Z)-decenoyl-[ACP]. Its pathway is lipid metabolism; fatty acid biosynthesis. Necessary for the introduction of cis unsaturation into fatty acids. Catalyzes the dehydration of (3R)-3-hydroxydecanoyl-ACP to E-(2)-decenoyl-ACP and then its isomerization to Z-(3)-decenoyl-ACP. Can catalyze the dehydratase reaction for beta-hydroxyacyl-ACPs with saturated chain lengths up to 16:0, being most active on intermediate chain length. The protein is 3-hydroxydecanoyl-[acyl-carrier-protein] dehydratase of Xylella fastidiosa (strain M23).